Reading from the N-terminus, the 261-residue chain is Cytochrome c oxidase subunit 3 (261 aa).

Over 1-15 (MTHQLHQYHLVDPSP) the chain is Mitochondrial matrix. Residues 16–34 (WPLTGAMGSLLLASGLAVW) form a helical membrane-spanning segment. Topologically, residues 35–40 (FHTNNT) are mitochondrial intermembrane. Residues 41 to 66 (MLLKFGLLTLLLTMFQWWRDIIREST) traverse the membrane as a helical segment. The Mitochondrial matrix portion of the chain corresponds to 67-72 (YQGHHT). A helical membrane pass occupies residues 73–105 (SGVQKNMRYGMILFITSEVFFFLGFFWALYHVS). The Mitochondrial intermembrane segment spans residues 106–128 (LVPTPELGAEWPPIGITPLNPME). A helical transmembrane segment spans residues 129–152 (VPLLNTAVLLSSGATITWSHHTMM). Over 153-155 (KGN) the chain is Mitochondrial matrix. The helical transmembrane segment at 156–183 (KKEATHALMLTIILGAYFTALQLSEYME) threads the bilayer. At 184–190 (TPFTIAD) the chain is on the mitochondrial intermembrane side. A helical transmembrane segment spans residues 191-223 (SVYGSLFFVATGFHGLHVMIGTSFLMVCALRLA). Residues 224-232 (KHHFTITHH) lie on the Mitochondrial matrix side of the membrane. The helical transmembrane segment at 233 to 256 (FGYEAAIWYWHFVDIVWLFLYISV) threads the bilayer. The Mitochondrial intermembrane portion of the chain corresponds to 257 to 261 (YWWGS).

The protein belongs to the cytochrome c oxidase subunit 3 family. In terms of assembly, component of the cytochrome c oxidase (complex IV, CIV), a multisubunit enzyme composed of 14 subunits. The complex is composed of a catalytic core of 3 subunits MT-CO1, MT-CO2 and MT-CO3, encoded in the mitochondrial DNA, and 11 supernumerary subunits COX4I, COX5A, COX5B, COX6A, COX6B, COX6C, COX7A, COX7B, COX7C, COX8 and NDUFA4, which are encoded in the nuclear genome. The complex exists as a monomer or a dimer and forms supercomplexes (SCs) in the inner mitochondrial membrane with NADH-ubiquinone oxidoreductase (complex I, CI) and ubiquinol-cytochrome c oxidoreductase (cytochrome b-c1 complex, complex III, CIII), resulting in different assemblies (supercomplex SCI(1)III(2)IV(1) and megacomplex MCI(2)III(2)IV(2)).

The protein localises to the mitochondrion inner membrane. It catalyses the reaction 4 Fe(II)-[cytochrome c] + O2 + 8 H(+)(in) = 4 Fe(III)-[cytochrome c] + 2 H2O + 4 H(+)(out). Its function is as follows. Component of the cytochrome c oxidase, the last enzyme in the mitochondrial electron transport chain which drives oxidative phosphorylation. The respiratory chain contains 3 multisubunit complexes succinate dehydrogenase (complex II, CII), ubiquinol-cytochrome c oxidoreductase (cytochrome b-c1 complex, complex III, CIII) and cytochrome c oxidase (complex IV, CIV), that cooperate to transfer electrons derived from NADH and succinate to molecular oxygen, creating an electrochemical gradient over the inner membrane that drives transmembrane transport and the ATP synthase. Cytochrome c oxidase is the component of the respiratory chain that catalyzes the reduction of oxygen to water. Electrons originating from reduced cytochrome c in the intermembrane space (IMS) are transferred via the dinuclear copper A center (CU(A)) of subunit 2 and heme A of subunit 1 to the active site in subunit 1, a binuclear center (BNC) formed by heme A3 and copper B (CU(B)). The BNC reduces molecular oxygen to 2 water molecules using 4 electrons from cytochrome c in the IMS and 4 protons from the mitochondrial matrix. The protein is Cytochrome c oxidase subunit 3 (MT-CO3) of Lycodon semicarinatus (Ryukyu odd-tooth snake).